The sequence spans 543 residues: Aluminum-activated malate transporter 14 (543 aa).

Helical transmembrane passes span 56 to 76 (VGVS…FKGI), 80 to 100 (AIWA…ATLC), 106 to 126 (GLGT…ANDS), 129 to 149 (IFRA…ITYL), 164 to 184 (LIFL…DTVI), and 191 to 211 (FYTI…VFPI). The segment at 416–438 (DTNEAASYQNTGTPRGERMSRFG) is disordered. A compositionally biased stretch (polar residues) spans 419 to 428 (EAASYQNTGT). Residues 445–472 (RLRADTLERRSAAATNERKILRQQLSRI) are a coiled coil.

Belongs to the aromatic acid exporter (TC 2.A.85) family.

The protein resides in the membrane. Malate transporter. The sequence is that of Aluminum-activated malate transporter 14 (ALMT14) from Arabidopsis thaliana (Mouse-ear cress).